The chain runs to 266 residues: MPPLHAVSPAAAAAPPRALSSAARVPQRPGCVPERPNILSSSTNFMSLRAGPMRFYSRPLILQNSDKRAVLRHATIEEIEAEKSVIEDQARERMEKAIETVQNNFNTVRTGRANPAMLDRIEVEYYGTPVNLKSIAQINTPDATSLLIQPYDKSSLKLIEKTIVAANLGVTPSNDGEVIRVTVPPLTSDRRKELAKTVAKLAEEGKVAIRNIRRDAIKAYDKLEKEKKLSEDNVKDLSADLQKVTDEYMKKIEAIQKQKEQELMKI.

Residues 1 to 26 (MPPLHAVSPAAAAAPPRALSSAARVP) are compositionally biased toward low complexity. The tract at residues 1 to 30 (MPPLHAVSPAAAAAPPRALSSAARVPQRPG) is disordered. A chloroplast-targeting transit peptide spans 1–74 (MPPLHAVSPA…SDKRAVLRHA (74 aa)). Coiled-coil stretches lie at residues 75–109 (TIEE…NTVR) and 207–266 (VAIR…LMKI).

This sequence belongs to the RRF family.

It is found in the plastid. The protein localises to the chloroplast. In terms of biological role, responsible for the release of ribosomes from messenger RNA at the termination of chloroplastic protein biosynthesis. This chain is Ribosome-recycling factor, chloroplastic, found in Oryza sativa subsp. indica (Rice).